A 361-amino-acid polypeptide reads, in one-letter code: POU domain, class 3, transcription factor 4 (361 aa).

Disordered stretches follow at residues 99–131 and 144–192; these read PHVA…GQPL and MLEH…PTSD. Positions 119-131 are enriched in polar residues; the sequence is APNSSITNSGQPL. Residues 165–183 show a composition bias toward basic and acidic residues; it reads VLREPPDHGELGSHHCQDH. The POU-specific domain maps to 186–260; the sequence is EETPTSDELE…LLNKWLEEAD (75 aa). Serine 265 bears the Phosphoserine mark. Residues 278-337 constitute a DNA-binding region (homeobox); sequence KRKKRTSIEVSVKGVLETHFLKCPKPAAQEISSLADSLQLEKEVVRVWFCNRRQKEKRMT. The tract at residues 334-361 is disordered; the sequence is KRMTPPGDQQPHEVYSHTVKTDASCHDL. The span at 343–361 shows a compositional bias: basic and acidic residues; sequence QPHEVYSHTVKTDASCHDL.

The protein belongs to the POU transcription factor family. Class-3 subfamily.

The protein resides in the nucleus. Functionally, probable transcription factor which exert its primary action widely during early neural development and in a very limited set of neurons in the mature brain. This Mesocricetus auratus (Golden hamster) protein is POU domain, class 3, transcription factor 4 (Pou3f4).